Reading from the N-terminus, the 780-residue chain is Semaphorin-3G (780 aa).

The N-terminal stretch at 1 to 22 (MDPSAWAICCLLGSLLFHVGIP) is a signal peptide. The Sema domain occupies 32–519 (RLRLSYRDLL…SPLGVARLQL (488 aa)). N44 is a glycosylation site (N-linked (GlcNAc...) asparagine). An intrachain disulfide couples C105 to C116. A glycan (N-linked (GlcNAc...) asparagine) is linked at N127. Intrachain disulfides connect C134/C143, C270/C382, C294/C342, C522/C540, and C603/C655. The region spanning 569 to 671 (PAVQCLGQGQ…FSQTVVRFAL (103 aa)) is the Ig-like C2-type domain. N-linked (GlcNAc...) asparagine glycosylation is present at N652.

This sequence belongs to the semaphorin family. As to expression, highly expressed in lung and kidney. Weakly expressed in brain.

It is found in the secreted. Has chemorepulsive activities for sympathetic axons. Ligand of NRP2. This chain is Semaphorin-3G (Sema3g), found in Mus musculus (Mouse).